Consider the following 321-residue polypeptide: MEPLATTLCPQECTQTTRNETPNETTWSSEHVTKYTYISISLVICSLGLVGNGLLIWFLIFCIKRKPFTIYILHLAFADFMVLLCSSIIQLVNTFHIYDSTLVSYAVLFMIFGYNTGLHLLTAISVERCLSVLYPIWYHCRRPKHQSTVACTLLWALSVLVSGLENFFCILEVKPQFPECRYVYIFSCTLTFLVFVPLMVFSNLILFIQVCCNLKPRQPAKLYVIIMATVILFLVFAMPMKVLLIIGYYSNSTDASVWKSLPYLNMLSTINCSINPIVYFVVGSLRRKRSRKSLKEALQKVFEEKPVVASRENEVQFSLPL.

At 1–35 (MEPLATTLCPQECTQTTRNETPNETTWSSEHVTKY) the chain is on the extracellular side. Asparagine 23 carries N-linked (GlcNAc...) asparagine glycosylation. The chain crosses the membrane as a helical span at residues 36 to 56 (TYISISLVICSLGLVGNGLLI). Residues 57–71 (WFLIFCIKRKPFTIY) lie on the Cytoplasmic side of the membrane. Residues 72 to 92 (ILHLAFADFMVLLCSSIIQLV) form a helical membrane-spanning segment. The Extracellular portion of the chain corresponds to 93 to 102 (NTFHIYDSTL). Residues 103–126 (VSYAVLFMIFGYNTGLHLLTAISV) traverse the membrane as a helical segment. Residues 127–147 (ERCLSVLYPIWYHCRRPKHQS) lie on the Cytoplasmic side of the membrane. A helical transmembrane segment spans residues 148–168 (TVACTLLWALSVLVSGLENFF). The Extracellular segment spans residues 169-188 (CILEVKPQFPECRYVYIFSC). The helical transmembrane segment at 189-209 (TLTFLVFVPLMVFSNLILFIQ) threads the bilayer. Topologically, residues 210–225 (VCCNLKPRQPAKLYVI) are cytoplasmic. A helical membrane pass occupies residues 226-246 (IMATVILFLVFAMPMKVLLII). A topological domain (extracellular) is located at residue glycine 247. A helical membrane pass occupies residues 248–271 (YYSNSTDASVWKSLPYLNMLSTIN). At 272-320 (CSINPIVYFVVGSLRRKRSRKSLKEALQKVFEEKPVVASRENEVQFSLP) the chain is on the cytoplasmic side.

The protein belongs to the G-protein coupled receptor 1 family. Mas subfamily.

Its subcellular location is the cell membrane. Functionally, orphan receptor. May regulate nociceptor function and/or development, including the sensation or modulation of pain. In Rattus norvegicus (Rat), this protein is Mas-related G-protein coupled receptor member H (Mrgprh).